A 101-amino-acid polypeptide reads, in one-letter code: Apolipoprotein C-II (101 aa).

Positions 1 to 22 (MGTRFLLALCLVLLVLGFEVQG) are cleaved as a signal peptide. A lipid binding region spans residues 66–74 (AVDEKLRDL). The lipoprotein lipase cofactor stretch occupies residues 78–101 (STAAMSTYTGIFTDQVLSVLKGEE).

It belongs to the apolipoprotein C2 family. In terms of processing, proapolipoprotein C-II is synthesized as a sialic acid containing glycoprotein which is subsequently desialylated prior to its proteolytic processing. Proapolipoprotein C-II, the major form found in plasma undergoes proteolytic cleavage of its N-terminal hexapeptide to generate apolipoprotein C-II, which occurs as the minor form in plasma.

The protein resides in the secreted. In terms of biological role, component of chylomicrons, very low-density lipoproteins (VLDL), low-density lipoproteins (LDL), and high-density lipoproteins (HDL) in plasma. Plays an important role in lipoprotein metabolism as an activator of lipoprotein lipase. Both proapolipoprotein C-II and apolipoprotein C-II can activate lipoprotein lipase. In Macaca fascicularis (Crab-eating macaque), this protein is Apolipoprotein C-II (APOC2).